The sequence spans 235 residues: Large ribosomal subunit protein uL1 (235 aa).

This sequence belongs to the universal ribosomal protein uL1 family. As to quaternary structure, part of the 50S ribosomal subunit.

Functionally, binds directly to 23S rRNA. The L1 stalk is quite mobile in the ribosome, and is involved in E site tRNA release. Protein L1 is also a translational repressor protein, it controls the translation of the L11 operon by binding to its mRNA. This is Large ribosomal subunit protein uL1 from Methylobacterium nodulans (strain LMG 21967 / CNCM I-2342 / ORS 2060).